The chain runs to 193 residues: nitroreductase FRM2 (193 aa).

Belongs to the nitroreductase family. It depends on FMN as a cofactor.

The protein resides in the cytoplasm. Its subcellular location is the nucleus. It carries out the reaction 4-(hydroxyamino)quinoline N-oxide + 2 NAD(+) + H2O = 4-nitroquinoline N-oxide + 2 NADH + 2 H(+). In terms of biological role, type II nitroreductase, able to reduce 4-nitroquinoline N-oxide (4-NQO) into 4-aminoquinoline-N-oxide (4-AQO) via 4-hydroxyaminoquinoline (4-HAQO), using NADH as reductant. involved in the oxidative stress response. Plays a possible role in the metal stress response. Involved in negative regulation of fatty acid metabolism. The sequence is that of nitroreductase FRM2 from Saccharomyces cerevisiae (strain ATCC 204508 / S288c) (Baker's yeast).